A 255-amino-acid polypeptide reads, in one-letter code: High-affinity branched-chain amino acid transport ATP-binding protein BraF (255 aa).

The 249-residue stretch at 6–254 (LEVSGLTMRF…PDVIKAYLGE (249 aa)) folds into the ABC transporter domain. 38 to 45 (GPNGAGKT) contacts ATP.

This sequence belongs to the ABC transporter superfamily.

The protein localises to the cell inner membrane. In terms of biological role, component of the high affinity leucine, isoleucine, valine, transport system (LIV-I), which is operative without Na(+) and is specific for alanine and threonine, in addition to branched-chain amino acids. In Pseudomonas aeruginosa (strain ATCC 15692 / DSM 22644 / CIP 104116 / JCM 14847 / LMG 12228 / 1C / PRS 101 / PAO1), this protein is High-affinity branched-chain amino acid transport ATP-binding protein BraF (braF).